Consider the following 592-residue polypeptide: Coronatine-insensitive protein 1 (592 aa).

The F-box domain occupies 16 to 57; sequence TVDDVIEQVMTYITDPKDRDSASLVCRRWFKIDSETREHVTM. 18 LRR repeats span residues 58–82, 83–102, 103–120, 121–154, 155–182, 183–210, 211–236, 237–264, 265–283, 284–308, 309–332, 333–368, 369–393, 394–426, 427–456, 457–478, 479–500, and 501–524; these read ALCYTATPDRLSRRFPNLRSLKLKG, KPRAAMFNLIPENWGGYVTP, WVTEISNNLRQLKSVHFR, RMIVSDLDLDRLAKARADDLETLKLDKCSGFTTD, GLLSIVTHCRKIKTLLMEESSFSEKDGK, WLHELAQHNTSLEVLNFYMTEFAKISPK, DLETIARNCRSLVSVKVGDFEILELV, GFFKAAANLEEFCGGSLNEDIGMPEKYM, NLVFPRKLCRLGLSYMGPN, EMPILFPFAAQIRKLDLLYALLETE, DHCTLIQKCPNLEVLETRNVIGDR, GLEVLAQYCKQLKRLRIERGADEQGMEDEEGLVSQR, GLIALAQGCQELEYMAVYVSDITNE, SLESIGTYLKNLCDFRLVLLDREERITDLPLDN, GVRSLLIGCKKLRRFAFYLRQGGLTDLGLS, YIGQYSPNVRWMLLGYVGESDE, GLMEFSRGCPNLQKLEMRGCCF, and SERAIAAAVTKLPSLRYLWVQGYR. Arginine 85 provides a ligand contact to jasmonate. Residues arginine 348, tyrosine 386, and arginine 409 each contribute to the jasmonate site. Residue arginine 496 participates in jasmonate binding.

Component of SCF(COI1) E3 ubiquitin ligase complexes at least composed of ASK1 or ASK2, CUL1, RBX1A or RBX1B and COI1. Interacts with ASK1 and ASK2, but separately. Also binds to ASK11 and ASK12. Interacts with RBCS-1B and HDA6. SCF complexes interact with the COP9 signalosome (CSN). Interacts with TIFY10A.

It participates in protein modification; protein ubiquitination. In terms of biological role, required for jasmonate-regulated plant fertility and defense processes, and for coronatine and/or other elicitors perceptions/responses. Seems to not be required for meiosis. Required for the regulation of some genes induced by wounding, but not for all. Component of SCF(COI1) E3 ubiquitin ligase complexes, which may mediate the ubiquitination and subsequent proteasomal degradation of target proteins (probably including the ribulose bisphosphate carboxylase small chain 1B RBCS-1B and the histone deacetylase HDA6). These SCF complexes play crucial roles in regulating response to jasmonate, and their interactions with the COP9 signalosome (CSN) appear to be important for their activity. Interacts with TIFY10A and inositol pentakisphosphate to form a high-affinity jasmonates coreceptor. Involved in the regulation of plant gene expression during plant-pathogen interactions with Pseudomonas syringae and Alternaria brassicicola. The sequence is that of Coronatine-insensitive protein 1 (COI1) from Arabidopsis thaliana (Mouse-ear cress).